The chain runs to 510 residues: GMP synthase [glutamine-hydrolyzing] (510 aa).

One can recognise a Glutamine amidotransferase type-1 domain in the interval L5–D195. C82 functions as the Nucleophile in the catalytic mechanism. Residues H169 and E171 contribute to the active site. In terms of domain architecture, GMPS ATP-PPase spans W196–R385. Position 223 to 229 (S223 to S229) interacts with ATP.

Homodimer.

The enzyme catalyses XMP + L-glutamine + ATP + H2O = GMP + L-glutamate + AMP + diphosphate + 2 H(+). Its pathway is purine metabolism; GMP biosynthesis; GMP from XMP (L-Gln route): step 1/1. Functionally, catalyzes the synthesis of GMP from XMP. This is GMP synthase [glutamine-hydrolyzing] from Clostridium botulinum (strain Kyoto / Type A2).